A 168-amino-acid chain; its full sequence is Iron-sulfur cluster assembly enzyme ISCU (168 aa).

A mitochondrion-targeting transit peptide spans 1–35; the sequence is MAAATGAGRLRRAASALLLRSPRLPARELSAPARL. Serine 15 carries the post-translational modification Phosphoserine. The active-site Cysteine persulfide intermediate is cysteine 70. Cysteine persulfide is present on cysteine 70. Residues aspartate 72, cysteine 96, and cysteine 139 each contribute to the Zn(2+) site. The Cysteine persulfide intermediate role is filled by cysteine 139. The residue at position 139 (cysteine 139) is a Cysteine persulfide.

This sequence belongs to the NifU family. As to quaternary structure, homodimer; Tyr-36-mediated dimerization of two iron- and sulfide-containing ISCU subunit bind to the cysteine desulfurase complex. Component of the mitochondrial core iron-sulfur cluster (ISC) complex composed of NFS1, LYRM4, NDUFAB1, ISCU, FXN, and FDX2; this complex is a heterohexamer containing two copies of each monomer. Interacts (D-state) with NFS1 (homodimer form); each monomer interacts with the C-terminal regions of each NFS1 monomer. Interacts (monomer form) with FXN (via ferrous form); the interaction is possible when both are bound to the dimeric form of the cysteine desulfurase complex (NFS1:LYRM4) and enhances FXN interaction to the dimeric form of the cysteine desulfurase complex (NFS1:LYRM4). Interacts with GLRX5. Interacts (D-state) with HSPA9. Interacts (S-state) with HSCB; this interaction stimulates the ATPase activity of HSPA9. Component of a complex composed of FXN, NFS1, LYRM4 and ISCU. In terms of processing, cysteine persulfide is reduced by thiol-containing molecules such as glutathione and L-cysteine. Post-translationally, phosphorylation at Ser-15 is required for ISCU protein stabilization in the cytosol, whereas dephosphorylation of Ser-15, due to the inhibition of mTORC1 (mammalian target of rapamycin complex 1) complex, leads to degradation of the precursor form and ultimately to a decrease in the mitochondrial mature form.

It localises to the mitochondrion. In terms of biological role, mitochondrial scaffold protein, of the core iron-sulfur cluster (ISC) assembly complex, that provides the structural architecture on which the [2Fe-2S] clusters are assembled. The core iron-sulfur cluster (ISC) assembly complex is involved in the de novo synthesis of a [2Fe-2S] cluster, the first step of the mitochondrial iron-sulfur protein biogenesis. This process is initiated by the cysteine desulfurase complex (NFS1:LYRM4:NDUFAB1) that produces persulfide which is delivered on the scaffold protein ISCU in a FXN-dependent manner. Then this complex is stabilized by FDX2 which provides reducing equivalents to accomplish the [2Fe-2S] cluster assembly. Finally, the [2Fe-2S] cluster is transferred from ISCU to chaperone proteins, including HSCB, HSPA9 and GLRX5. Exists as two slow interchanging conformational states, a structured (S) and disordered (D) form. May modulate NFS1 desulfurase activity in a zinc-dependent manner. Modulates the interaction between FXN and the cysteine desulfurase complex. This chain is Iron-sulfur cluster assembly enzyme ISCU, found in Mus musculus (Mouse).